A 244-amino-acid chain; its full sequence is 1-(5-phosphoribosyl)-5-[(5-phosphoribosylamino)methylideneamino] imidazole-4-carboxamide isomerase (244 aa).

D8 (proton acceptor) is an active-site residue. The active-site Proton donor is the D129.

Belongs to the HisA/HisF family.

The protein resides in the cytoplasm. The catalysed reaction is 1-(5-phospho-beta-D-ribosyl)-5-[(5-phospho-beta-D-ribosylamino)methylideneamino]imidazole-4-carboxamide = 5-[(5-phospho-1-deoxy-D-ribulos-1-ylimino)methylamino]-1-(5-phospho-beta-D-ribosyl)imidazole-4-carboxamide. It functions in the pathway amino-acid biosynthesis; L-histidine biosynthesis; L-histidine from 5-phospho-alpha-D-ribose 1-diphosphate: step 4/9. The chain is 1-(5-phosphoribosyl)-5-[(5-phosphoribosylamino)methylideneamino] imidazole-4-carboxamide isomerase from Chelativorans sp. (strain BNC1).